We begin with the raw amino-acid sequence, 932 residues long: MAVVIRLQGLPIVAGTMDIRHFFSGLTIPDGGVHIVGGELGEAFIVFATDEDARLGMMRTGGTIKGSKVTLLLSSKTEMQNMIELSRRRFETANLDIPPANASRSGPPPSSGMSSRVNLPTTVSNFNNPSPSVVTATTSVHESNKNIQTFSTASVGTAPPNMGASFGSPTFSSTVPSTASPMNTVPPPPIPPIPAMPSLPPMPSIPPIPVPPPVPTLPPVPPVPPIPPVPSVPPMTPLPPMSGMPPLNPPPVAPLPAGMNGSGAPMNLNNNLNPMFLGPLNPVNPIQMNSQSSVKPLPINPDDLYVSVHGMPFSAMENDVRDFFHGLRVDAVHLLKDHVGRNNGNGLVKFLSPQDTFEALKRNRMLMIQRYVEVSPATERQWVAAGGHITFKQNMGPSGQTHPPPQTLPRSKSPSGQKRSRSRSPHEAGFCVYLKGLPFEAENKHVIDFFKKLDIVEDSIYIAYGPNGKATGEGFVEFRNEADYKAALCRHKQYMGNRFIQVHPITKKGMLEKIDMIRKRLQNFSYDQREMILNPEGDVNSAKVCAHITNIPFSITKMDVLQFLEGIPVDENAVHVLVDNNGQGLGQALVQFKNEDDARKSERLHRKKLNGREAFVHVVTLEDMREIEKNPPAQGKKGLKMPVPGNPAVPGMPNAGLPGVGLPSAGLPGAGLPSTGLPGSAITSAGLPGAGMPSAGIPSAGGEEHAFLTVGSKEANNGPPFNFPGNFGGSNAFGPPIPPPGLGGGAFGDARPGMPSVGNSGLPGLGLDVPGFGGGPNNLSGPSGFGGGPQNFGNGPGSLGGPPGFGSGPPGLGSAPGHLGGPPAFGPGPGPGPGPGPIHIGGPPGFASSSGKPGPTVIKVQNMPFTVSIDEILDFFYGYQVIPGSVCLKYNEKGMPTGEAMVAFESRDEATAAVIDLNDRPIGSRKVKLVLG.

Positions 96–116 (DIPPANASRSGPPPSSGMSSR) are disordered. Residues 98 to 116 (PPANASRSGPPPSSGMSSR) are compositionally biased toward low complexity. Positions 304 to 379 (LYVSVHGMPF…RYVEVSPATE (76 aa)) constitute an RRM 1 domain. 2 positions are modified to phosphoserine: Ser352 and Ser375. Polar residues-rich tracts occupy residues 392 to 401 (KQNMGPSGQT) and 408 to 417 (LPRSKSPSGQ). The interval 392 to 424 (KQNMGPSGQTHPPPQTLPRSKSPSGQKRSRSRS) is disordered. Ser420, Ser422, and Ser424 each carry phosphoserine. Residues 430–507 (FCVYLKGLPF…RFIQVHPITK (78 aa)) form the RRM 2 domain. Position 525 is a phosphoserine (Ser525). A compositionally biased stretch (low complexity) spans 717–734 (NGPPFNFPGNFGGSNAFG). A disordered region spans residues 717–853 (NGPPFNFPGN…PGFASSSGKP (137 aa)). The segment covering 783–811 (SGFGGGPQNFGNGPGSLGGPPGFGSGPPG) has biased composition (gly residues). Positions 824–836 (AFGPGPGPGPGPG) are enriched in pro residues. An RRM 3 domain is found at 856–932 (TVIKVQNMPF…GSRKVKLVLG (77 aa)).

The protein localises to the nucleus. This chain is RNA-binding protein 12 (RBM12), found in Homo sapiens (Human).